Reading from the N-terminus, the 356-residue chain is Uroporphyrinogen decarboxylase (356 aa).

Residues 23-27 (RQAGR), Asp72, Tyr148, Ser203, and His321 contribute to the substrate site.

It belongs to the uroporphyrinogen decarboxylase family. Homodimer.

The protein resides in the cytoplasm. The enzyme catalyses uroporphyrinogen III + 4 H(+) = coproporphyrinogen III + 4 CO2. The protein operates within porphyrin-containing compound metabolism; protoporphyrin-IX biosynthesis; coproporphyrinogen-III from 5-aminolevulinate: step 4/4. Functionally, catalyzes the decarboxylation of four acetate groups of uroporphyrinogen-III to yield coproporphyrinogen-III. The chain is Uroporphyrinogen decarboxylase from Chloroflexus aggregans (strain MD-66 / DSM 9485).